Consider the following 1371-residue polypeptide: DNA-directed RNA polymerase subunit beta (1371 aa).

The protein belongs to the RNA polymerase beta chain family. The RNAP catalytic core consists of 2 alpha, 1 beta, 1 beta' and 1 omega subunit. When a sigma factor is associated with the core the holoenzyme is formed, which can initiate transcription.

The enzyme catalyses RNA(n) + a ribonucleoside 5'-triphosphate = RNA(n+1) + diphosphate. DNA-dependent RNA polymerase catalyzes the transcription of DNA into RNA using the four ribonucleoside triphosphates as substrates. This Geobacter sp. (strain M21) protein is DNA-directed RNA polymerase subunit beta.